The chain runs to 357 residues: Protein-L-isoaspartate O-methyltransferase domain-containing protein 1 (357 aa).

The N-myristoyl glycine moiety is linked to residue glycine 2. Serine 64 is a catalytic residue. AdoMet binding motif regions lie at residues 85–94 (LNLGSGTGYL), 160–164 (YDRIY), and 181–191 (LKVGGILVMPI). The segment at 240–250 (VRNLQDLARIY) is BC-box. The segment at 299–333 (PLDSEEDEKMEEDNKEEEEKDHNEAMKPEEPPQNL) is disordered. The segment covering 301-317 (DSEEDEKMEEDNKEEEE) has biased composition (acidic residues). Positions 318–333 (KDHNEAMKPEEPPQNL) are enriched in basic and acidic residues. The tract at residues 341 to 344 (LPLP) is CUL-box.

This sequence belongs to the methyltransferase superfamily. L-isoaspartyl/D-aspartyl protein methyltransferase family. Component of the probable ECS(PCMTD1) E3 ubiquitin-protein ligase complex, at least composed of CUL5, ELOB, ELOC, RBX2 and PCMTD1. Interacts (via the BC-box) with ELOB and ELOC; the interaction is direct and stabilizes PCMTD1.

Its subcellular location is the cytoplasm. The protein resides in the membrane. In terms of biological role, substrate recognition component of an ECS (Elongin BC-CUL5-SOCS-box protein) E3 ubiquitin ligase complex which mediates the ubiquitination and subsequent proteasomal degradation of target proteins. Specifically binds to the methyltransferase cofactor S-adenosylmethionine (AdoMet) via the N-terminal AdoMet binding motif, but does not display methyltransferase activity. May provide an alternate maintenance pathway for modified proteins by acting as a damage-specific E3 ubiquitin ligase adaptor protein. The protein is Protein-L-isoaspartate O-methyltransferase domain-containing protein 1 of Homo sapiens (Human).